Consider the following 275-residue polypeptide: Glucosamine-6-phosphate deaminase 2 (275 aa).

Asp72 serves as the catalytic Proton acceptor; for enolization step. The stretch at 103-131 (NAHILDGNASDLQAECEDFERKIKEAGGI) forms a coiled coil. The For ring-opening step role is filled by Asp141. The active-site Proton acceptor; for ring-opening step is His143. Glu148 functions as the For ring-opening step in the catalytic mechanism.

This sequence belongs to the glucosamine/galactosamine-6-phosphate isomerase family. In terms of assembly, homohexamer.

It localises to the cytoplasm. It catalyses the reaction alpha-D-glucosamine 6-phosphate + H2O = beta-D-fructose 6-phosphate + NH4(+). In terms of biological role, catalyzes the reversible conversion of alpha-D-glucosamine 6-phosphate (GlcN-6P) into beta-D-fructose 6-phosphate (Fru-6P) and ammonium ion, a regulatory reaction step in de novo uridine diphosphate-N-acetyl-alpha-D-glucosamine (UDP-GlcNAc) biosynthesis via hexosamine pathway. The chain is Glucosamine-6-phosphate deaminase 2 from Xenopus tropicalis (Western clawed frog).